We begin with the raw amino-acid sequence, 355 residues long: Phosphate acyltransferase (355 aa).

The protein belongs to the PlsX family. In terms of assembly, homodimer. Probably interacts with PlsY.

The protein resides in the cytoplasm. The enzyme catalyses a fatty acyl-[ACP] + phosphate = an acyl phosphate + holo-[ACP]. The protein operates within lipid metabolism; phospholipid metabolism. Catalyzes the reversible formation of acyl-phosphate (acyl-PO(4)) from acyl-[acyl-carrier-protein] (acyl-ACP). This enzyme utilizes acyl-ACP as fatty acyl donor, but not acyl-CoA. The sequence is that of Phosphate acyltransferase from Rhodospirillum centenum (strain ATCC 51521 / SW).